The following is a 64-amino-acid chain: Large ribosomal subunit protein bL35 (64 aa).

The span at Met-1–Lys-28 shows a compositional bias: basic residues. Positions Met-1–Arg-64 are disordered. A compositionally biased stretch (basic and acidic residues) spans Asp-53–Arg-64.

The protein belongs to the bacterial ribosomal protein bL35 family.

The protein is Large ribosomal subunit protein bL35 of Pseudomonas aeruginosa (strain LESB58).